The chain runs to 66 residues: Large ribosomal subunit protein bL35 (66 aa).

Residues 1-16 are compositionally biased toward basic residues; that stretch reads MPKQKTHRASAKRFKR. Positions 1–21 are disordered; sequence MPKQKTHRASAKRFKRTGSGG.

Belongs to the bacterial ribosomal protein bL35 family.

The chain is Large ribosomal subunit protein bL35 from Streptococcus sanguinis (strain SK36).